The following is a 304-amino-acid chain: N-acetylmuramic acid 6-phosphate etherase (304 aa).

Serine 2 is subject to Phosphoserine. The region spanning 59–222 (AYESFQNGGR…STAVMVKIGK (164 aa)) is the SIS domain. The Proton donor role is filled by glutamate 87. Residue glutamate 118 is part of the active site.

Belongs to the GCKR-like family. MurNAc-6-P etherase subfamily. In terms of assembly, homodimer.

It carries out the reaction N-acetyl-D-muramate 6-phosphate + H2O = N-acetyl-D-glucosamine 6-phosphate + (R)-lactate. The protein operates within amino-sugar metabolism; N-acetylmuramate degradation. In terms of biological role, specifically catalyzes the cleavage of the D-lactyl ether substituent of MurNAc 6-phosphate, producing GlcNAc 6-phosphate and D-lactate. The chain is N-acetylmuramic acid 6-phosphate etherase from Bacillus subtilis (strain 168).